The following is a 427-amino-acid chain: Amino acid transporter AVT3A (427 aa).

The interval 1-35 (MRYDQEAGSSSHSLPSGSSSHSLPPTEDTPLLGPR) is disordered. The Cytoplasmic portion of the chain corresponds to 1–42 (MRYDQEAGSSSHSLPSGSSSHSLPPTEDTPLLGPRTLSSQPK). The span at 8 to 24 (GSSSHSLPSGSSSHSLP) shows a compositional bias: low complexity. Residues 43–63 (TFANVFIAIVGAGVLGLPYTF) form a helical membrane-spanning segment. Over 64–69 (KKTGWL) the chain is Vacuolar. A helical transmembrane segment spans residues 70-90 (LGLLTLLFVSSLTFFCMMLLV). Topologically, residues 91–122 (HTRRKLESLSGFNSITSFGDLGESVCGPAGRL) are cytoplasmic. The helical transmembrane segment at 123–143 (VVDVMLVLSQSGFCVSYLIFV) threads the bilayer. Residues 144-157 (ATTMANLLSRGTEH) lie on the Vacuolar side of the membrane. Residues 158–178 (ILGLDAASIYLWGCFPFQLGL) traverse the membrane as a helical segment. Over 179-186 (NSIPSLTH) the chain is Cytoplasmic. A helical transmembrane segment spans residues 187 to 207 (LAPLSIFADIVDVAATLVVMV). The Vacuolar segment spans residues 208-227 (QDVFIFLKRRPPLRVFGGVS). Residues 228–248 (VFFYGLGVAVYAFEGIGMVLP) form a helical membrane-spanning segment. Topologically, residues 249–262 (LELEAKYKDKFGRA) are cytoplasmic. The chain crosses the membrane as a helical span at residues 263 to 283 (LGLAMGLISIMYGAFGLLGYM). Topologically, residues 284 to 300 (AYGEETKDIITTNLGTG) are vacuolar. The chain crosses the membrane as a helical span at residues 301–321 (VVSTLVQLGLAINLFFTFPLM). Residues 322–339 (MQPVYEVVERRLCSSRYS) are Cytoplasmic-facing. The chain crosses the membrane as a helical span at residues 340-360 (VWVRWATVLVVTLVALLVPNF). The Vacuolar segment spans residues 361-362 (AD). The chain crosses the membrane as a helical span at residues 363–383 (FLSLVGSSVCVVLGFVLPSLF). The Cytoplasmic segment spans residues 384 to 396 (HLQAFKNELSITR). Residues 397–417 (IVVDVLVFLIGVMIAITGTWT) traverse the membrane as a helical segment. The Vacuolar segment spans residues 418–427 (AVHEILTSKA).

The protein belongs to the amino acid/polyamine transporter 2 family. Amino acid/auxin permease (AAAP) (TC 2.A.18.8) subfamily. As to expression, ubiquitous.

The protein localises to the vacuole membrane. Translocates preferentially neutral amino acids and to a lesser extent aromatic amino acids from the vacuole to the cytoplasm. Requires ATP for function. The chain is Amino acid transporter AVT3A from Arabidopsis thaliana (Mouse-ear cress).